A 270-amino-acid chain; its full sequence is Energy-coupling factor transporter transmembrane protein EcfT (270 aa).

The next 4 helical transmembrane spans lie at 36-56 (LFIV…LISI), 72-92 (PIFI…GGAN), 108-128 (LIMA…TSLL), and 248-268 (FIAS…RIWW).

The protein belongs to the energy-coupling factor EcfT family. As to quaternary structure, forms a stable energy-coupling factor (ECF) transporter complex composed of 2 membrane-embedded substrate-binding proteins (S component), 2 ATP-binding proteins (A component) and 2 transmembrane proteins (T component). May be able to interact with more than 1 S component at a time.

The protein resides in the cell membrane. Transmembrane (T) component of an energy-coupling factor (ECF) ABC-transporter complex. Unlike classic ABC transporters this ECF transporter provides the energy necessary to transport a number of different substrates. In Clostridium kluyveri (strain ATCC 8527 / DSM 555 / NBRC 12016 / NCIMB 10680 / K1), this protein is Energy-coupling factor transporter transmembrane protein EcfT.